Consider the following 298-residue polypeptide: N-acetylmuramic acid 6-phosphate etherase (298 aa).

The region spanning 57-220 is the SIS domain; that stretch reads IAAAFGKGGR…STGAMIRTGK (164 aa). The Proton donor role is filled by Glu85. Residue Glu116 is part of the active site.

It belongs to the GCKR-like family. MurNAc-6-P etherase subfamily. Homodimer.

The catalysed reaction is N-acetyl-D-muramate 6-phosphate + H2O = N-acetyl-D-glucosamine 6-phosphate + (R)-lactate. Its pathway is amino-sugar metabolism; 1,6-anhydro-N-acetylmuramate degradation. It functions in the pathway amino-sugar metabolism; N-acetylmuramate degradation. The protein operates within cell wall biogenesis; peptidoglycan recycling. In terms of biological role, specifically catalyzes the cleavage of the D-lactyl ether substituent of MurNAc 6-phosphate, producing GlcNAc 6-phosphate and D-lactate. Together with AnmK, is also required for the utilization of anhydro-N-acetylmuramic acid (anhMurNAc) either imported from the medium or derived from its own cell wall murein, and thus plays a role in cell wall recycling. The protein is N-acetylmuramic acid 6-phosphate etherase of Aeromonas hydrophila subsp. hydrophila (strain ATCC 7966 / DSM 30187 / BCRC 13018 / CCUG 14551 / JCM 1027 / KCTC 2358 / NCIMB 9240 / NCTC 8049).